The sequence spans 91 residues: Acylphosphatase (91 aa).

One can recognise an Acylphosphatase-like domain in the interval 5 to 91 (RAHVFVSGRV…EGVDGFEVRW (87 aa)). Active-site residues include Arg20 and Asn38.

It belongs to the acylphosphatase family.

The catalysed reaction is an acyl phosphate + H2O = a carboxylate + phosphate + H(+). This chain is Acylphosphatase (acyP), found in Haloarcula marismortui (strain ATCC 43049 / DSM 3752 / JCM 8966 / VKM B-1809) (Halobacterium marismortui).